The chain runs to 317 residues: Ribosome production factor 2 homolog (317 aa).

In terms of domain architecture, Brix spans 28–240 (KTAIFLRGNA…IRRVQPAESD (213 aa)). The segment at 287-317 (MKGLKRSVEEREDSENEEVEIEEDVISDASE) is disordered. Phosphoserine is present on residues S293, S300, S313, and S316. A compositionally biased stretch (acidic residues) spans 296 to 317 (EREDSENEEVEIEEDVISDASE).

It belongs to the RPF2 family. Component of a hexameric 5S RNP precursor complex, composed of 5S RNA, rrs1, rpf2, rpl5a/rpl5b, rpl11a/rpl11b and syo1; this complex acts as a precursor for ribosome assembly.

It localises to the nucleus. Its subcellular location is the nucleolus. The protein is Ribosome production factor 2 homolog of Schizosaccharomyces pombe (strain 972 / ATCC 24843) (Fission yeast).